The chain runs to 249 residues: Phosphomannomutase 1 (249 aa).

Asp-12 (nucleophile) is an active-site residue. Mg(2+)-binding residues include Asp-12 and Asp-14. Asp-14 functions as the Proton donor/acceptor in the catalytic mechanism. Positions 21, 123, 134, 141, 179, and 181 each coordinate alpha-D-mannose 1-phosphate. Residues Asp-209, Asp-223, and Thr-227 each coordinate Mg(2+).

This sequence belongs to the eukaryotic PMM family. In terms of assembly, homodimer.

The protein resides in the cytoplasm. It catalyses the reaction alpha-D-mannose 1-phosphate = D-mannose 6-phosphate. The protein operates within nucleotide-sugar biosynthesis; GDP-alpha-D-mannose biosynthesis; alpha-D-mannose 1-phosphate from D-fructose 6-phosphate: step 2/2. Functionally, involved in the synthesis of the GDP-mannose and dolichol-phosphate-mannose required for a number of critical mannosyl transfer reactions. This chain is Phosphomannomutase 1 (pmmA), found in Dictyostelium discoideum (Social amoeba).